The sequence spans 256 residues: Type III pantothenate kinase (256 aa).

An ATP-binding site is contributed by Asp-6 to Val-13. Substrate contacts are provided by residues Tyr-100 and Gly-107 to Arg-110. Residue Asp-109 is the Proton acceptor of the active site. Residue Asp-129 participates in K(+) binding. ATP is bound at residue Thr-132. Thr-184 serves as a coordination point for substrate.

Belongs to the type III pantothenate kinase family. In terms of assembly, homodimer. It depends on NH4(+) as a cofactor. K(+) is required as a cofactor.

It is found in the cytoplasm. It catalyses the reaction (R)-pantothenate + ATP = (R)-4'-phosphopantothenate + ADP + H(+). It functions in the pathway cofactor biosynthesis; coenzyme A biosynthesis; CoA from (R)-pantothenate: step 1/5. Functionally, catalyzes the phosphorylation of pantothenate (Pan), the first step in CoA biosynthesis. The protein is Type III pantothenate kinase of Acidothermus cellulolyticus (strain ATCC 43068 / DSM 8971 / 11B).